Consider the following 220-residue polypeptide: ATP synthase F(0) complex subunit a (220 aa).

Helical transmembrane passes span 12-32 (PTLLGVPLIAVAMMFPWTLLP), 69-89 (WAMILMSLNLLGLLPYTFTPT), 91-111 (QLSLNMGLAIPFWLATVLLGL), 130-150 (LLIPILIIIETISLLIRPFAL), 158-178 (LTAGHLLMQLIATAAFVLLPM), and 183-203 (ALLTTLVLFLLTLLEIAVAMI).

The protein belongs to the ATPase A chain family. In terms of assembly, component of the ATP synthase complex composed at least of ATP5F1A/subunit alpha, ATP5F1B/subunit beta, ATP5MC1/subunit c (homooctomer), MT-ATP6/subunit a, MT-ATP8/subunit 8, ATP5ME/subunit e, ATP5MF/subunit f, ATP5MG/subunit g, ATP5MK/subunit k, ATP5MJ/subunit j, ATP5F1C/subunit gamma, ATP5F1D/subunit delta, ATP5F1E/subunit epsilon, ATP5PF/subunit F6, ATP5PB/subunit b, ATP5PD/subunit d, ATP5PO/subunit OSCP. ATP synthase complex consists of a soluble F(1) head domain (subunits alpha(3) and beta(3)) - the catalytic core - and a membrane F(0) domain - the membrane proton channel (subunits c, a, 8, e, f, g, k and j). These two domains are linked by a central stalk (subunits gamma, delta, and epsilon) rotating inside the F1 region and a stationary peripheral stalk (subunits F6, b, d, and OSCP). Interacts with DNAJC30; interaction is direct.

The protein localises to the mitochondrion inner membrane. It catalyses the reaction H(+)(in) = H(+)(out). Functionally, subunit a, of the mitochondrial membrane ATP synthase complex (F(1)F(0) ATP synthase or Complex V) that produces ATP from ADP in the presence of a proton gradient across the membrane which is generated by electron transport complexes of the respiratory chain. ATP synthase complex consist of a soluble F(1) head domain - the catalytic core - and a membrane F(1) domain - the membrane proton channel. These two domains are linked by a central stalk rotating inside the F(1) region and a stationary peripheral stalk. During catalysis, ATP synthesis in the catalytic domain of F(1) is coupled via a rotary mechanism of the central stalk subunits to proton translocation. With the subunit c (ATP5MC1), forms the proton-conducting channel in the F(0) domain, that contains two crucial half-channels (inlet and outlet) that facilitate proton movement from the mitochondrial intermembrane space (IMS) into the matrix. Protons are taken up via the inlet half-channel and released through the outlet half-channel, following a Grotthuss mechanism. The protein is ATP synthase F(0) complex subunit a of Latimeria chalumnae (Coelacanth).